Consider the following 135-residue polypeptide: Interleukin-4 (135 aa).

A signal peptide spans 1–24; that stretch reads MGLTSQLIPALVCLLVCTSHFVHG. Disulfide bonds link C27–C135, C48–C85, and C70–C105. N62 and N96 each carry an N-linked (GlcNAc...) asparagine glycan.

Belongs to the IL-4/IL-13 family.

It is found in the secreted. Functionally, participates in at least several B-cell activation processes as well as of other cell types. It is a costimulator of DNA-synthesis. It induces the expression of class II MHC molecules on resting B-cells. It enhances both secretion and cell surface expression of IgE and IgG1. It also regulates the expression of the low affinity Fc receptor for IgE (CD23) on both lymphocytes and monocytes. Positively regulates IL31RA expression in macrophages. Stimulates autophagy in dendritic cells by interfering with mTORC1 signaling and through the induction of RUFY4. The polypeptide is Interleukin-4 (IL4) (Capra hircus (Goat)).